The sequence spans 476 residues: Aspartyl/glutamyl-tRNA(Asn/Gln) amidotransferase subunit B (476 aa).

It belongs to the GatB/GatE family. GatB subfamily. In terms of assembly, heterotrimer of A, B and C subunits.

The enzyme catalyses L-glutamyl-tRNA(Gln) + L-glutamine + ATP + H2O = L-glutaminyl-tRNA(Gln) + L-glutamate + ADP + phosphate + H(+). It carries out the reaction L-aspartyl-tRNA(Asn) + L-glutamine + ATP + H2O = L-asparaginyl-tRNA(Asn) + L-glutamate + ADP + phosphate + 2 H(+). In terms of biological role, allows the formation of correctly charged Asn-tRNA(Asn) or Gln-tRNA(Gln) through the transamidation of misacylated Asp-tRNA(Asn) or Glu-tRNA(Gln) in organisms which lack either or both of asparaginyl-tRNA or glutaminyl-tRNA synthetases. The reaction takes place in the presence of glutamine and ATP through an activated phospho-Asp-tRNA(Asn) or phospho-Glu-tRNA(Gln). This Clostridium botulinum (strain Loch Maree / Type A3) protein is Aspartyl/glutamyl-tRNA(Asn/Gln) amidotransferase subunit B.